Here is a 437-residue protein sequence, read N- to C-terminus: Neomycin resistance protein (437 aa).

Disordered stretches follow at residues 161-285 (GQRG…EEEA) and 305-338 (VSGAGHRVDPLPAPAPGPDRRRHRGRRHGRPVPD). Residues 203-229 (PPTGARSPGATAGARATASTSSSSVRS) are compositionally biased toward low complexity. The segment covering 324–338 (RRRHRGRRHGRPVPD) has biased composition (basic residues).

It belongs to the Gram-positive plasmids replication protein type 1 family.

This is Neomycin resistance protein from Streptomyces cyanogenus.